The following is a 187-amino-acid chain: Ribonuclease HII (187 aa).

The region spanning 1 to 187 (MIILGIDEAG…YKPVQVLLNE (187 aa)) is the RNase H type-2 domain. A divalent metal cation-binding residues include D7, E8, and D99.

The protein belongs to the RNase HII family. It depends on Mn(2+) as a cofactor. Mg(2+) is required as a cofactor.

It is found in the cytoplasm. The catalysed reaction is Endonucleolytic cleavage to 5'-phosphomonoester.. Functionally, endonuclease that specifically degrades the RNA of RNA-DNA hybrids. This Francisella tularensis subsp. tularensis (strain FSC 198) protein is Ribonuclease HII.